A 160-amino-acid chain; its full sequence is MYSAKNRFVQSVQRLQDFRNMYDYEARLATFADWPFTENCKCTPENMAKAGFVHCPTENEPDVACCFFCLKELEGWEPDDDPWNEHSKRSVNCGFLSLTKCVNDLTMEGFLRLEGDRIKSFYRKFSTVVLQYVEEEMTAATKRLLEYFSNQHQCSIDLDH.

The stretch at 13 to 83 (QRLQDFRNMY…EGWEPDDDPW (71 aa)) is one BIR repeat. Thr-43 carries the phosphothreonine; by CDK1 modification. Residues Cys-66, Cys-69, His-86, and Cys-93 each contribute to the Zn(2+) site.

It belongs to the IAP family. As to quaternary structure, component of the CPC at least composed of survivin/birc5, incenp, cdca8/borealin and/or cdca9/dasra-A, and aurkb/aurora-B. Interacts directly with incenp (via N-terminus), and may weakly interact with aurkb (via N-terminus) to stabilize the complex. Interacts with GTP-bound ran in both the S and M phases of the cell cycle. Also found in a complex with ubiquitin-mediated signaling proteins including at least usp9x/xFAM, nploc4/npl4 and ufd1. In terms of processing, ubiquitination is required for centrosome-targeting.

The protein resides in the cytoplasm. It is found in the nucleus. It localises to the chromosome. The protein localises to the centromere. Its subcellular location is the cytoskeleton. The protein resides in the spindle. Component of the chromosomal passenger complex (CPC), a complex that acts as a key regulator of mitosis. The CPC complex has essential functions at the centromere in ensuring correct chromosome alignment and segregation and is required for chromatin-induced microtubule stabilization and spindle assembly. Stimulates the mitotic kinase activity of aurkb/aurora-B in the CPC. Does not appear to exhibit anti-apoptotic activity. CPC. Does not appear to exhibit anti-apoptotic activity. This Xenopus laevis (African clawed frog) protein is Baculoviral IAP repeat-containing protein 5.1-B (birc5.1-b).